A 121-amino-acid chain; its full sequence is Large ribosomal subunit protein bL12 (121 aa).

This sequence belongs to the bacterial ribosomal protein bL12 family. As to quaternary structure, homodimer. Part of the ribosomal stalk of the 50S ribosomal subunit. Forms a multimeric L10(L12)X complex, where L10 forms an elongated spine to which 2 to 4 L12 dimers bind in a sequential fashion. Binds GTP-bound translation factors.

Forms part of the ribosomal stalk which helps the ribosome interact with GTP-bound translation factors. Is thus essential for accurate translation. The sequence is that of Large ribosomal subunit protein bL12 from Malacoplasma penetrans (strain HF-2) (Mycoplasma penetrans).